Reading from the N-terminus, the 889-residue chain is MQNHGFNDGSYGGRRLPAAGTDEYHADQYYDDRAGHNLGPYSNSSQGQLYTADYSSERLYMQPPQSITQSPSPGPYYNHQQDHVVNPQQIHDRGEYFDGYNQGHPPQEHQAYDDDGQPLIEDQHGYSDNPQHQTQTPAGGIKRWKTVKQVLLYRGNLVLDCPVPPILLNQNPHSKERDEFTHMRYSAATCDPSDFYNENFTLRQKLFSSPRHTELFIVVTMYNEDDILFARTMIGVFKNIEYMCNRPNSKTWGKDAWKKIVVCVVSDGRAKINPRTKAILSGMGVYQEGIAKQQVNNKDVTAHIYEYSTHTHLQLKNGVVSLVHNRQPVQMLFCLKEKNQKKINSHRWFFQAFGRVLDPNICVLIDAGTRPGGNSIYHLWKAFDLEPMCGGACGEIKAMLGTGGKNLINPLVATQNFEYKMSNILDKPLESAFGFISVLPGAFSAYRYVALQNDKNGKGPLEKYFLGETLHGGSSAGLFESNMYLAEDRILCFELVTKRNCHWILQYVKSATGETDVPDTVTELVLQRRRWLNGSFFAAIYAIAHFYEFFRSDHSFFRKLAFFVEFVFNTINMIFAWFAIGNFFLVFKILTTSLGSADLLGRTGEILGVVFTWLYGVFLMTCFVLSMGNRPAGSGRLYTAMVWFWAIIMIYLMFAAIFIAVKAIIKDVNSGTAFSISQLFKNPVFYTLIISVMSTFGIWLIASIIMFDPWHMLTSFIQYMLLTPTYTNVLNVYAFCNTHDVSWGTKGDDKVEKLPSVNTKDGQGKTDLPDEGDLNAQYQREIEKFSTKFKEVKTPPTAAQLQEKQMDYYRGVRTGVVLIWMITNFALAALVLSSAGLERITPGNGNSQQEATDRSNIYMTIVLWSVAVLSGFKFLGAMWFLVVRMFRGV.

N-linked (GlcNAc...) asparagine glycosylation occurs at N43. The tract at residues 94 to 138 (GEYFDGYNQGHPPQEHQAYDDDGQPLIEDQHGYSDNPQHQTQTPA) is disordered. The segment covering 126–137 (YSDNPQHQTQTP) has biased composition (polar residues). The N-linked (GlcNAc...) asparagine glycan is linked to N199. A run of 9 helical transmembrane segments spans residues 431–451 (SAFG…YVAL), 530–550 (RWLN…YEFF), 560–580 (LAFF…WFAI), 606–626 (ILGV…FVLS), 641–661 (MVWF…FIAV), 687–707 (TLII…IIMF), 716–736 (FIQY…YAFC), 815–835 (GVVL…LSSA), and 861–881 (IVLW…MWFL).

The protein belongs to the chitin synthase family. Class I subfamily. Expressed in hyphal bodies.

Its subcellular location is the cell membrane. It catalyses the reaction [(1-&gt;4)-N-acetyl-beta-D-glucosaminyl](n) + UDP-N-acetyl-alpha-D-glucosamine = [(1-&gt;4)-N-acetyl-beta-D-glucosaminyl](n+1) + UDP + H(+). Functionally, polymerizes chitin, a structural polymer of the cell wall and septum, by transferring the sugar moiety of UDP-GlcNAc to the non-reducing end of the growing chitin polymer. Contributes to the production of conidia and the ability of fungal conidia to germinate. Not involved in fungal stress tolerances. This is Chitin synthase I from Metarhizium acridum (strain CQMa 102).